A 422-amino-acid polypeptide reads, in one-letter code: MGVDLRQVVAGILTITMFVMLGQMLHRDYFDSLQEKAQGDAQDIEFEGSKVSVKDGLVGTVEGSKGLWMEDNTDLTPCWPTLLSDDAVSSKGYVTFSLTNGPEYHISQITDAVMVAKHLGATLVLPDIRGSKPGDERNFEDIYDADKLIKSLENVVKVVKKLPEEVSLRNMAIVKVPTRVTEDYIKEHIDPIFKSKGNIRVASYFPSVNLRKSSQDGETDPVACLAMFGSLELQPEVNAVAESMVERLRTHSRKSGGRFIAVDLRIDILEKKNCHTTGVVGSKTCYNAQEIALFLRKLGFASDTTIYLTQPRWDSSLNILKDIFPKTFTKEAIMPASKRSKYLESVSSEYENVIDFYISSRSDVFVPAISGLFYANTVGKRIALGKPQVLVPAEISETSGLATDFISPYISKKNHLAYSCFC.

Topologically, residues 1–6 (MGVDLR) are cytoplasmic. The helical; Signal-anchor for type II membrane protein transmembrane segment at 7-26 (QVVAGILTITMFVMLGQMLH) threads the bilayer. The Lumenal portion of the chain corresponds to 27–422 (RDYFDSLQEK…KNHLAYSCFC (396 aa)). 263-265 (DLR) provides a ligand contact to substrate.

It belongs to the glycosyltransferase GT106 family. As to expression, widely expressed.

It localises to the golgi apparatus membrane. Its pathway is glycan biosynthesis. Functionally, glycosyltransferase involved in mannan biosynthesis. This is Protein MANNAN SYNTHESIS-RELATED 1 from Arabidopsis thaliana (Mouse-ear cress).